A 269-amino-acid polypeptide reads, in one-letter code: MDTMLNRILAHKRIEVERQRIKTPYDQMRTRAETAPPPRDFGAALRAHHPIALIAEVKKASPSKGVLIENFDPLALARTYASNGAAAISVLTDVRFFQGHLKYIEGIRALFDRGAAPPLPLLRKDFMIDPYQIVEARAYGADAVLLIVAALDDETLAALLALAGDLGMQALVEVHNADELRRALAVGARIIGVNNRDLHSFTTTLETTRHLAALLPSENRPLLVSESGIFTADHVALVRSWGVDAVLVGEALVTAPDIAGKVRELGGRL.

It belongs to the TrpC family.

It carries out the reaction 1-(2-carboxyphenylamino)-1-deoxy-D-ribulose 5-phosphate + H(+) = (1S,2R)-1-C-(indol-3-yl)glycerol 3-phosphate + CO2 + H2O. It participates in amino-acid biosynthesis; L-tryptophan biosynthesis; L-tryptophan from chorismate: step 4/5. The protein is Indole-3-glycerol phosphate synthase of Roseiflexus castenholzii (strain DSM 13941 / HLO8).